The primary structure comprises 499 residues: Pyruvate kinase 2 (499 aa).

Substrate is bound at residue Arg-50. K(+) contacts are provided by Asn-52, Ser-54, Asp-84, and Thr-85. ATP is bound at residue Asn-52–His-55. Residue Arg-91 coordinates ATP. Glu-241 provides a ligand contact to Mg(2+). Substrate is bound by residues Gly-264, Asp-265, and Thr-297. Asp-265 contributes to the Mg(2+) binding site.

Belongs to the pyruvate kinase family. As to quaternary structure, homotetramer. Mg(2+) serves as cofactor. K(+) is required as a cofactor.

It carries out the reaction pyruvate + ATP = phosphoenolpyruvate + ADP + H(+). The protein operates within carbohydrate degradation; glycolysis; pyruvate from D-glyceraldehyde 3-phosphate: step 5/5. Activated by fructose 2,6-bisphosphate, activated by the effector in a cooperative manner. The sequence is that of Pyruvate kinase 2 (PYK2) from Trypanosoma brucei brucei.